Reading from the N-terminus, the 366-residue chain is PPPPPPQQFPQFHVRSGLQIKKNAIIDDYKVTSQVLGLGINGKVLQIFSKKTQEKFALKMLQDCPKARREVELHWRASQCPHIVRIVDVYENLYAGRKCLLIVMECLDGGELFSRIQDRGDQAFTEREASEIMKSIGEAIQYLHSINIAHRDVKPENLLYTSKRPKAILKLTDFGFAKETTSHNSLTTPCYTPYYVAPEVLGPEKYDKSCDMWSLGVIMYILLCGYPPFYSNHGLAISPGMKTRIRMGQYEFPNPEWSEVSEEVKMLIRNLLKTEPTQRMTITEFMNHPWIMQSTKVPQTPLHTSRVLKEDKERWEDVKEEMTSALATMRVDYEQIKIKKIEDASNPLLLKRRKKARALEAAALAH.

Residues 30-291 form the Protein kinase domain; sequence KVTSQVLGLG…ITEFMNHPWI (262 aa). ATP-binding positions include 36–44 and lysine 59; that span reads LGLGINGKV. 105–107 contacts staurosporine; sequence ECL. Aspartate 152 functions as the Proton acceptor in the catalytic mechanism. Residue threonine 188 is modified to Phosphothreonine; by MAPK14. Serine 238 is modified (phosphoserine; by MAPK14). Serine 294 is subject to Phosphoserine; by autocatalysis. The tract at residues 294–330 is autoinhibitory helix; sequence STKVPQTPLHTSRVLKEDKERWEDVKEEMTSALATMR. Residue threonine 300 is modified to Phosphothreonine; by MAPK14. Lysine 319 participates in a covalent cross-link: Glycyl lysine isopeptide (Lys-Gly) (interchain with G-Cter in SUMO). The Nuclear export signal (NES) motif lies at 322–331; that stretch reads MTSALATMRV. Positions 332 to 356 are p38 MAPK-binding site; the sequence is DYEQIKIKKIEDASNPLLLKRRKKA. 2 consecutive short sequence motifs (bipartite nuclear localization signal) follow at residues 337–340 and 351–355; these read KIKK and KRRKK.

The protein belongs to the protein kinase superfamily. CAMK Ser/Thr protein kinase family. Heterodimer with p38-alpha/MAPK14; this heterodimer forms a stable complex: molecules are positioned 'face to face' so that the ATP-binding sites of both kinases are at the heterodimer interface. Interacts with PHC2. Interacts with HSF1. Post-translationally, sumoylation inhibits the protein kinase activity. In terms of processing, phosphorylated and activated by MAP kinase p38-alpha/MAPK14 at Thr-188, Ser-238 and Thr-300.

The protein localises to the cytoplasm. Its subcellular location is the nucleus. It carries out the reaction L-seryl-[protein] + ATP = O-phospho-L-seryl-[protein] + ADP + H(+). It catalyses the reaction L-threonyl-[protein] + ATP = O-phospho-L-threonyl-[protein] + ADP + H(+). Activated following phosphorylation by p38-alpha/MAPK14 following various stresses. Inhibited following sumoylation. Specifically inhibited by pyrrolopyridine inhibitors. Its function is as follows. Stress-activated serine/threonine-protein kinase involved in cytokine production, endocytosis, reorganization of the cytoskeleton, cell migration, cell cycle control, chromatin remodeling, DNA damage response and transcriptional regulation. Following stress, it is phosphorylated and activated by MAP kinase p38-alpha/MAPK14, leading to phosphorylation of substrates. Phosphorylates serine in the peptide sequence, Hyd-X-R-X(2)-S, where Hyd is a large hydrophobic residue. Phosphorylates ALOX5, CDC25B, CDC25C, CEP131, ELAVL1, HNRNPA0, HSP27/HSPB1, KRT18, KRT20, LIMK1, LSP1, PABPC1, PARN, PDE4A, RCSD1, RPS6KA3, TAB3 and TTP/ZFP36. Phosphorylates HSF1; leading to the interaction with HSP90 proteins and inhibiting HSF1 homotrimerization, DNA-binding and transactivation activities. Mediates phosphorylation of HSP27/HSPB1 in response to stress, leading to dissociation of HSP27/HSPB1 from large small heat-shock protein (sHsps) oligomers and impairment of their chaperone activities and ability to protect against oxidative stress effectively. Involved in inflammatory response by regulating tumor necrosis factor (TNF) and IL6 production post-transcriptionally: acts by phosphorylating AU-rich elements (AREs)-binding proteins ELAVL1, HNRNPA0, PABPC1 and TTP/ZFP36, leading to regulate the stability and translation of TNF and IL6 mRNAs. Phosphorylation of TTP/ZFP36, a major post-transcriptional regulator of TNF, promotes its binding to 14-3-3 proteins and reduces its ARE mRNA affinity leading to inhibition of dependent degradation of ARE-containing transcripts. Phosphorylates CEP131 in response to cellular stress following ultraviolet irradiation which promotes binding of CEP131 to 14-3-3 proteins and inhibits formation of novel centriolar satellites. Also involved in late G2/M checkpoint following DNA damage through a process of post-transcriptional mRNA stabilization: following DNA damage, relocalizes from nucleus to cytoplasm and phosphorylates HNRNPA0 and PARN, leading to stabilization of GADD45A mRNA. Involved in toll-like receptor signaling pathway (TLR) in dendritic cells: required for acute TLR-induced macropinocytosis by phosphorylating and activating RPS6KA3. The protein is MAP kinase-activated protein kinase 2 (MAPKAPK2) of Oryctolagus cuniculus (Rabbit).